Consider the following 354-residue polypeptide: Probable L-ascorbate-6-phosphate lactonase UlaG (354 aa).

Belongs to the UlaG family. A divalent metal cation serves as cofactor.

The protein localises to the cytoplasm. The catalysed reaction is L-ascorbate 6-phosphate + H2O = 3-dehydro-L-gulonate 6-phosphate. The protein operates within cofactor degradation; L-ascorbate degradation; D-xylulose 5-phosphate from L-ascorbate: step 1/4. Probably catalyzes the hydrolysis of L-ascorbate-6-P into 3-keto-L-gulonate-6-P. Is essential for L-ascorbate utilization under anaerobic conditions. The sequence is that of Probable L-ascorbate-6-phosphate lactonase UlaG from Shigella dysenteriae serotype 1 (strain Sd197).